The sequence spans 587 residues: L-ascorbate oxidase (587 aa).

Positions 1–33 (MAKVADKPFFPKPFLSFLVLSIIFGFGITLSEA) are cleaved as a signal peptide. Plastocyanin-like domains follow at residues 38–157 (IKHY…LIVD) and 169–335 (DEEI…NYLP). 3 disulfides stabilise this stretch: Cys-54/Cys-236, Cys-116/Cys-574, and Cys-215/Cys-228. 4 residues coordinate Cu cation: His-95, His-97, His-139, and His-141. N-linked (GlcNAc...) asparagine glycans are attached at residues Asn-360, Asn-401, and Asn-475. A Plastocyanin-like 3 domain is found at 379–559 (NRRLFLLNTQ…HMGMGVVFAE (181 aa)). His-480, His-483, His-485, His-542, Cys-543, His-544, His-548, and Met-553 together coordinate Cu cation.

It belongs to the multicopper oxidase family. As to quaternary structure, dimer. Cu cation serves as cofactor.

The protein localises to the secreted. The catalysed reaction is 4 L-ascorbate + O2 = 4 monodehydro-L-ascorbate radical + 2 H2O. Its function is as follows. May be involved in a redox system involving ascorbic acid. The chain is L-ascorbate oxidase from Cucumis sativus (Cucumber).